We begin with the raw amino-acid sequence, 37 residues long: Cytochrome b6-f complex subunit 5 (37 aa).

Residues 5–25 traverse the membrane as a helical segment; it reads LLSGIVLGLIPVTLAGLFVTA.

It belongs to the PetG family. The 4 large subunits of the cytochrome b6-f complex are cytochrome b6, subunit IV (17 kDa polypeptide, PetD), cytochrome f and the Rieske protein, while the 4 small subunits are PetG, PetL, PetM and PetN. The complex functions as a dimer.

The protein resides in the plastid. It is found in the chloroplast thylakoid membrane. Component of the cytochrome b6-f complex, which mediates electron transfer between photosystem II (PSII) and photosystem I (PSI), cyclic electron flow around PSI, and state transitions. PetG is required for either the stability or assembly of the cytochrome b6-f complex. In Chlorokybus atmophyticus (Soil alga), this protein is Cytochrome b6-f complex subunit 5.